Reading from the N-terminus, the 449-residue chain is Na(+)-translocating NADH-quinone reductase subunit A (449 aa).

The protein belongs to the NqrA family. In terms of assembly, composed of six subunits; NqrA, NqrB, NqrC, NqrD, NqrE and NqrF.

It carries out the reaction a ubiquinone + n Na(+)(in) + NADH + H(+) = a ubiquinol + n Na(+)(out) + NAD(+). Functionally, NQR complex catalyzes the reduction of ubiquinone-1 to ubiquinol by two successive reactions, coupled with the transport of Na(+) ions from the cytoplasm to the periplasm. NqrA to NqrE are probably involved in the second step, the conversion of ubisemiquinone to ubiquinol. This Actinobacillus pleuropneumoniae serotype 3 (strain JL03) protein is Na(+)-translocating NADH-quinone reductase subunit A.